The primary structure comprises 276 residues: MAIRKMKPITNGTRHMSRLVNDELDKVRPEKSLTVPLKSAYGRDNYGHRTCRDRQKGHKRLYRIIDFKRNKLDVPARVATIEYDPNRSANIALLFYVDGEKRYILAPKGLKKGDIVSAGSKAEIKPGNALKLKDMPVGVQIHNIELQRGKGGQLVRSAGTAARLVAKEGTYCHVELPSGELRLIHGECMATVGEVGNSEHNLVNIGKAGRARHMGKRPHVRGAVMNPVDHPHGGGEGKNSVGRKSPLTPWGKPALGIKTRGRKTSDKFIVRRRNEK.

The tract at residues 223–276 (AVMNPVDHPHGGGEGKNSVGRKSPLTPWGKPALGIKTRGRKTSDKFIVRRRNEK) is disordered. Over residues 263–276 (KTSDKFIVRRRNEK) the composition is skewed to basic and acidic residues.

This sequence belongs to the universal ribosomal protein uL2 family. Part of the 50S ribosomal subunit. Forms a bridge to the 30S subunit in the 70S ribosome.

Its function is as follows. One of the primary rRNA binding proteins. Required for association of the 30S and 50S subunits to form the 70S ribosome, for tRNA binding and peptide bond formation. It has been suggested to have peptidyltransferase activity; this is somewhat controversial. Makes several contacts with the 16S rRNA in the 70S ribosome. The sequence is that of Large ribosomal subunit protein uL2 from Fusobacterium nucleatum subsp. nucleatum (strain ATCC 25586 / DSM 15643 / BCRC 10681 / CIP 101130 / JCM 8532 / KCTC 2640 / LMG 13131 / VPI 4355).